The sequence spans 498 residues: Probable cytosol aminopeptidase (498 aa).

Mn(2+) is bound by residues K263 and D268. K275 is an active-site residue. Positions 286, 345, and 347 each coordinate Mn(2+). R349 is an active-site residue.

The protein belongs to the peptidase M17 family. The cofactor is Mn(2+).

The protein resides in the cytoplasm. The enzyme catalyses Release of an N-terminal amino acid, Xaa-|-Yaa-, in which Xaa is preferably Leu, but may be other amino acids including Pro although not Arg or Lys, and Yaa may be Pro. Amino acid amides and methyl esters are also readily hydrolyzed, but rates on arylamides are exceedingly low.. It catalyses the reaction Release of an N-terminal amino acid, preferentially leucine, but not glutamic or aspartic acids.. In terms of biological role, presumably involved in the processing and regular turnover of intracellular proteins. Catalyzes the removal of unsubstituted N-terminal amino acids from various peptides. The chain is Probable cytosol aminopeptidase from Rhodopseudomonas palustris (strain BisA53).